We begin with the raw amino-acid sequence, 426 residues long: Glutamate-1-semialdehyde 2,1-aminomutase (426 aa).

Position 265 is an N6-(pyridoxal phosphate)lysine (lysine 265).

The protein belongs to the class-III pyridoxal-phosphate-dependent aminotransferase family. HemL subfamily. In terms of assembly, homodimer. Pyridoxal 5'-phosphate is required as a cofactor.

It localises to the cytoplasm. The catalysed reaction is (S)-4-amino-5-oxopentanoate = 5-aminolevulinate. It functions in the pathway porphyrin-containing compound metabolism; protoporphyrin-IX biosynthesis; 5-aminolevulinate from L-glutamyl-tRNA(Glu): step 2/2. This chain is Glutamate-1-semialdehyde 2,1-aminomutase, found in Salmonella enteritidis PT4 (strain P125109).